Consider the following 417-residue polypeptide: Imidazolonepropionase (417 aa).

Fe(3+)-binding residues include His-80 and His-82. Zn(2+)-binding residues include His-80 and His-82. 4-imidazolone-5-propanoate is bound by residues Arg-89, Tyr-152, and His-187. Tyr-152 contacts N-formimidoyl-L-glutamate. His-252 lines the Fe(3+) pocket. Zn(2+) is bound at residue His-252. Glu-255 is a 4-imidazolone-5-propanoate binding site. Asp-326 contributes to the Fe(3+) binding site. Asp-326 is a binding site for Zn(2+). N-formimidoyl-L-glutamate-binding residues include Asn-328 and Gly-330. Ser-331 serves as a coordination point for 4-imidazolone-5-propanoate.

This sequence belongs to the metallo-dependent hydrolases superfamily. HutI family. Requires Zn(2+) as cofactor. Fe(3+) serves as cofactor.

Its subcellular location is the cytoplasm. The catalysed reaction is 4-imidazolone-5-propanoate + H2O = N-formimidoyl-L-glutamate. It functions in the pathway amino-acid degradation; L-histidine degradation into L-glutamate; N-formimidoyl-L-glutamate from L-histidine: step 3/3. Catalyzes the hydrolytic cleavage of the carbon-nitrogen bond in imidazolone-5-propanoate to yield N-formimidoyl-L-glutamate. It is the third step in the universal histidine degradation pathway. This Bacteroides fragilis (strain YCH46) protein is Imidazolonepropionase.